We begin with the raw amino-acid sequence, 1193 residues long: DNA-directed RNA polymerase subunit beta (1193 aa).

Residues 1173 to 1193 (QQAKEAAELEKAKEEALDKTE) form a disordered region. The span at 1177–1193 (EAAELEKAKEEALDKTE) shows a compositional bias: basic and acidic residues.

This sequence belongs to the RNA polymerase beta chain family. As to quaternary structure, the RNAP catalytic core consists of 2 alpha, 1 beta, 1 beta' and 1 omega subunit. When a sigma factor is associated with the core the holoenzyme is formed, which can initiate transcription.

It catalyses the reaction RNA(n) + a ribonucleoside 5'-triphosphate = RNA(n+1) + diphosphate. DNA-dependent RNA polymerase catalyzes the transcription of DNA into RNA using the four ribonucleoside triphosphates as substrates. This chain is DNA-directed RNA polymerase subunit beta, found in Streptococcus thermophilus (strain CNRZ 1066).